The following is a 203-amino-acid chain: High frequency lysogenization protein HflD homolog (203 aa).

It belongs to the HflD family.

It localises to the cytoplasm. The protein localises to the cell inner membrane. This Vesicomyosocius okutanii subsp. Calyptogena okutanii (strain HA) protein is High frequency lysogenization protein HflD homolog.